The following is a 631-amino-acid chain: Transmembrane and coiled-coil domain-containing protein 4 (631 aa).

Positions 1–27 are disordered; the sequence is MATWNRPHPRQPVAPEPAAEDDSQQPL. The stretch at 156–183 forms a coiled coil; that stretch reads FLESLKDAKEEESETAEASRKRKEKRRK. A run of 3 helical transmembrane segments spans residues 200–220, 228–248, and 343–363; these read VIGVTGGLAAPLVAAGAATII, LGSVAGIAVMTSLFGAAGAGL, and LSGIVAALTWPASLLSVANVI. The interval 555-595 is disordered; that stretch reads DGQSQGPASEDSLKTTIPSSASQAQMPAGLNQSTEDSLSTA. A compositionally biased stretch (polar residues) spans 568 to 594; sequence KTTIPSSASQAQMPAGLNQSTEDSLST.

Belongs to the TMCO4 family.

It is found in the membrane. The polypeptide is Transmembrane and coiled-coil domain-containing protein 4 (Tmco4) (Mus musculus (Mouse)).